Consider the following 396-residue polypeptide: DNA polymerase interacting tetratricopeptide repeat-containing, protein of 47 kDa (396 aa).

3 TPR repeats span residues 91-124, 129-162, and 163-196; these read ALNY…KTDN, AVLY…KPDY, and TKAR…DVDN.

It belongs to the TTC4 family. As to quaternary structure, forms a complex with Hsp83 and Hsp70aa. Interacts with DNApol-alpha180; the interaction inhibits the activity of the DNA polymerase and occurs only in proliferating cells but not in quiescent cells. As to expression, more abundant in young embryos, pupae and females and a lower level expression seen in late embryos, larvae and males.

It localises to the nucleus. It is found in the nucleoplasm. The protein resides in the cytoplasm. Functionally, may act as a co-chaperone for HSP83. The chain is DNA polymerase interacting tetratricopeptide repeat-containing, protein of 47 kDa (Dpit47) from Drosophila melanogaster (Fruit fly).